We begin with the raw amino-acid sequence, 482 residues long: Glutamyl-tRNA(Gln) amidotransferase subunit A (482 aa).

Residues Lys74 and Ser149 each act as charge relay system in the active site. Ser173 serves as the catalytic Acyl-ester intermediate.

This sequence belongs to the amidase family. GatA subfamily. In terms of assembly, heterotrimer of A, B and C subunits.

The enzyme catalyses L-glutamyl-tRNA(Gln) + L-glutamine + ATP + H2O = L-glutaminyl-tRNA(Gln) + L-glutamate + ADP + phosphate + H(+). Functionally, allows the formation of correctly charged Gln-tRNA(Gln) through the transamidation of misacylated Glu-tRNA(Gln) in organisms which lack glutaminyl-tRNA synthetase. The reaction takes place in the presence of glutamine and ATP through an activated gamma-phospho-Glu-tRNA(Gln). The polypeptide is Glutamyl-tRNA(Gln) amidotransferase subunit A (Prochlorococcus marinus (strain MIT 9215)).